The sequence spans 683 residues: DNA-directed RNA polymerase subunit beta' (683 aa).

Residues Cys-69, Cys-71, Cys-87, and Cys-90 each contribute to the Zn(2+) site. Mg(2+)-binding residues include Asp-489, Asp-491, and Asp-493.

This sequence belongs to the RNA polymerase beta' chain family. RpoC1 subfamily. In plastids the minimal PEP RNA polymerase catalytic core is composed of four subunits: alpha, beta, beta', and beta''. When a (nuclear-encoded) sigma factor is associated with the core the holoenzyme is formed, which can initiate transcription. Mg(2+) is required as a cofactor. It depends on Zn(2+) as a cofactor.

It is found in the plastid. The protein localises to the chloroplast. It carries out the reaction RNA(n) + a ribonucleoside 5'-triphosphate = RNA(n+1) + diphosphate. Functionally, DNA-dependent RNA polymerase catalyzes the transcription of DNA into RNA using the four ribonucleoside triphosphates as substrates. This chain is DNA-directed RNA polymerase subunit beta', found in Sorghum bicolor (Sorghum).